A 701-amino-acid polypeptide reads, in one-letter code: Polyribonucleotide nucleotidyltransferase (701 aa).

Residues Asp-490 and Asp-496 each contribute to the Mg(2+) site. In terms of domain architecture, KH spans 557–616; that stretch reads PKVETMTIKPEKIRDVIGPGGKKINEIIDETGVKLDIEQDGTIFIGAVDQDMINRAREII. Residues 626–694 enclose the S1 motif domain; that stretch reads GQVYNAKVRR…DKGRVNASHR (69 aa).

It belongs to the polyribonucleotide nucleotidyltransferase family. It depends on Mg(2+) as a cofactor.

The protein resides in the cytoplasm. The catalysed reaction is RNA(n+1) + phosphate = RNA(n) + a ribonucleoside 5'-diphosphate. Its function is as follows. Involved in mRNA degradation. Catalyzes the phosphorolysis of single-stranded polyribonucleotides processively in the 3'- to 5'-direction. The sequence is that of Polyribonucleotide nucleotidyltransferase from Staphylococcus carnosus (strain TM300).